A 67-amino-acid chain; its full sequence is uncharacterized protein (67 aa).

It belongs to the flocculin family.

This is an uncharacterized protein from Saccharomyces cerevisiae (strain ATCC 204508 / S288c) (Baker's yeast).